Reading from the N-terminus, the 507-residue chain is ATP synthase subunit alpha, chloroplastic (507 aa).

An ATP-binding site is contributed by glycine 170 to threonine 177. Threonine 257 carries the phosphothreonine modification.

It belongs to the ATPase alpha/beta chains family. In terms of assembly, F-type ATPases have 2 components, CF(1) - the catalytic core - and CF(0) - the membrane proton channel. CF(1) has five subunits: alpha(3), beta(3), gamma(1), delta(1), epsilon(1). CF(0) has four main subunits: a, b, b' and c.

It is found in the plastid. The protein localises to the chloroplast thylakoid membrane. It catalyses the reaction ATP + H2O + 4 H(+)(in) = ADP + phosphate + 5 H(+)(out). Produces ATP from ADP in the presence of a proton gradient across the membrane. The alpha chain is a regulatory subunit. This is ATP synthase subunit alpha, chloroplastic from Lepidium virginicum (Virginia pepperweed).